We begin with the raw amino-acid sequence, 540 residues long: MSFQITDIPRILPELMLLLLGLLVLGSDVLTRWGRGPAAQLERAREAGQLTAVGLGLVFIVGLVQSRFLFTVPDPAGGPLDVLLTLGRNLQTGGPGGSPILGAFATDEFTMIARLTFIGAAFLTTLLAMGYRLTANPGEFYALLIFSTLGMSIMAAATEFILAYLALELSSLSLYVLAGYFRESERSPEAGLKYFLFGSLSSAIFLYGISLTYGFVASENQKAGGAPIIATLFSEVGRFATGDAAGSPLLILGMLFIIAGLGYKISVVPFHTWAPDVYQGAPPPVTAFLSTASKAAGFLLLYRLLTTAFPGAVGAPRLEEFNGWTSILAILALVTVIVGNLAALPQTNARRLLAYSSIGHAGFLLLAVLLWASASPVDRTFGTAALIYYLIVYSLTNLGSFGVLAVLTNALGSDDLSAMQGLWRRNMSLTLMMTILILSLAGIPPLAGFWAKFFVFMAGYQAGAVPLVTIAVIMTVVSLYYYLRFLKAMWILPAPAITPFKTPPVANAAIILSTVLVVLLGLLPNLIWGTISSAASVAAR.

13 helical membrane-spanning segments follow: residues 11 to 31, 52 to 72, 109 to 129, 142 to 162, 195 to 215, 250 to 270, 284 to 306, 324 to 344, 352 to 372, 386 to 406, 431 to 451, 464 to 486, and 508 to 528; these read ILPELMLLLLGLLVLGSDVLT, AVGLGLVFIVGLVQSRFLFTV, FTMIARLTFIGAAFLTTLLAM, ALLIFSTLGMSIMAAATEFIL, FLFGSLSSAIFLYGISLTYGF, LILGMLFIIAGLGYKISVVPF, PVTAFLSTASKAAGFLLLYRLLT, WTSILAILALVTVIVGNLAAL, LLAYSSIGHAGFLLLAVLLWA, LIYYLIVYSLTNLGSFGVLAV, LMMTILILSLAGIPPLAGFWA, AVPLVTIAVIMTVVSLYYYLRFL, and AAIILSTVLVVLLGLLPNLIW.

This sequence belongs to the complex I subunit 2 family. As to quaternary structure, NDH-1 is composed of 14 different subunits. Subunits NuoA, H, J, K, L, M, N constitute the membrane sector of the complex.

It is found in the cell membrane. The enzyme catalyses a quinone + NADH + 5 H(+)(in) = a quinol + NAD(+) + 4 H(+)(out). NDH-1 shuttles electrons from NADH, via FMN and iron-sulfur (Fe-S) centers, to quinones in the respiratory chain. The immediate electron acceptor for the enzyme in this species is believed to be ubiquinone. Couples the redox reaction to proton translocation (for every two electrons transferred, four hydrogen ions are translocated across the cytoplasmic membrane), and thus conserves the redox energy in a proton gradient. The sequence is that of NADH-quinone oxidoreductase subunit N 1 from Roseiflexus castenholzii (strain DSM 13941 / HLO8).